The primary structure comprises 244 residues: Krueppel-like factor 9 (244 aa).

The interval 80–142 (SVCSDSLESP…AKGKHASEKR (63 aa)) is disordered. The residue at position 122 (S122) is a Phosphoserine. C2H2-type zinc fingers lie at residues 143-167 (HKCPYSGCGKVYGKSSHLKAHYRVH), 173-197 (FPCTWPDCLKKFSRSDELTRHYRTH), and 203-225 (FRCPLCEKRFMRSDHLTKHARRH).

Belongs to the Sp1 C2H2-type zinc-finger protein family. Interacts with ZZEF1. In terms of tissue distribution, epidermis (at protein level).

The protein localises to the nucleus. Transcription factor that binds to GC box promoter elements. Selectively activates mRNA synthesis from genes containing tandem repeats of GC boxes but represses genes with a single GC box. Acts as an epidermal circadian transcription factor regulating keratinocyte proliferation. This Homo sapiens (Human) protein is Krueppel-like factor 9 (KLF9).